The sequence spans 712 residues: Polyphosphate kinase (712 aa).

An ATP-binding site is contributed by asparagine 49. Mg(2+) contacts are provided by arginine 398 and arginine 428. Histidine 458 (phosphohistidine intermediate) is an active-site residue. Tyrosine 491, arginine 587, and histidine 615 together coordinate ATP.

It belongs to the polyphosphate kinase 1 (PPK1) family. Mg(2+) serves as cofactor. Post-translationally, an intermediate of this reaction is the autophosphorylated ppk in which a phosphate is covalently linked to a histidine residue through a N-P bond.

It carries out the reaction [phosphate](n) + ATP = [phosphate](n+1) + ADP. In terms of biological role, catalyzes the reversible transfer of the terminal phosphate of ATP to form a long-chain polyphosphate (polyP). The chain is Polyphosphate kinase from Prochlorococcus marinus (strain MIT 9313).